The chain runs to 467 residues: FAD-dependent oxidoreductase dbaF (467 aa).

A signal peptide spans 1–20 (MKSVLASGALTLAFSLAALA). 5 N-linked (GlcNAc...) asparagine glycosylation sites follow: Asn-96, Asn-134, Asn-337, Asn-391, and Asn-451.

It belongs to the beta-cyclopiazonate dehydrogenase family. It depends on FAD as a cofactor.

It participates in secondary metabolite biosynthesis. Functionally, FAD-dependent oxidoreductase; part of the gene cluster that mediates the biosynthesis of the antibiotic 2,4-dihydroxy-3-methyl-6-(2-oxopropyl)benzaldehyde (DHMBA) and its derivatives. The direct non-reducing polyketide synthase dbaI product is 2,4-dihydroxy-3-methyl-6-(2-oxopropyl)benzaldehyde (DHMBA), produced by condensation of one acetyl-CoA starter unit with 4 malonyl-CoA units and one methylation step. The FAD-dependent monooxygenase dbaH is responsible for the synthesis of yellow pigments derived from the oxidation of DHMBA. The roles of dbaB, C, E and F have still to be determined. This is FAD-dependent oxidoreductase dbaF from Emericella nidulans (strain FGSC A4 / ATCC 38163 / CBS 112.46 / NRRL 194 / M139) (Aspergillus nidulans).